We begin with the raw amino-acid sequence, 550 residues long: Glucagon-like peptide 2 receptor (550 aa).

Over 1-173 (MRPQPSPAVP…SFRQNVDHYA (173 aa)) the chain is Extracellular. Intrachain disulfides connect C83/C105, C96/C137, and C118/C159. 4 N-linked (GlcNAc...) asparagine glycosylation sites follow: N97, N113, N148, and N162. A helical membrane pass occupies residues 174–198 (LLYTLQLMYTVGYSVSLISLFLALT). Residues 199–210 (LFLFLRKLHCTR) are Cytoplasmic-facing. Residues 211–235 (NYIHMNLFASFILKVLAVLVKDMVS) form a helical membrane-spanning segment. The Extracellular segment spans residues 236 to 261 (HNSYSKRPDDESGWMSYLSETSVSCR). Residues 262–285 (SVQVLLHYFVGTNHLWLLVEGLYL) form a helical membrane-spanning segment. At 286–299 (HTLLEPTVFPERRL) the chain is on the cytoplasmic side. A helical transmembrane segment spans residues 300 to 321 (WPKYLVVGWAFPMLFVIPWGFA). Over 322-339 (RAHLENTRCWATNGNLKI) the chain is Extracellular. A helical transmembrane segment spans residues 340–362 (WWIIRGPMLLCVTVNFFIFLKIL). Topologically, residues 363–386 (KLLISKLKAHQMCFRDYKYRLAKS) are cytoplasmic. The chain crosses the membrane as a helical span at residues 387-405 (TLLLIPLLGVHEVLFTFFP). Residues 406-417 (DDQVQGFSKRIR) lie on the Extracellular side of the membrane. Residues 418–438 (LFIQLTLSSVHGFLVALQYGF) traverse the membrane as a helical segment. Over 439-550 (ANGEVKAELR…MEEILEESEI (112 aa)) the chain is Cytoplasmic.

It belongs to the G-protein coupled receptor 2 family.

It is found in the cell membrane. Its function is as follows. This is a receptor for glucagon-like peptide 2. The activity of this receptor is mediated by G proteins which activate adenylyl cyclase. The sequence is that of Glucagon-like peptide 2 receptor (Glp2r) from Rattus norvegicus (Rat).